The following is a 388-amino-acid chain: Succinate--CoA ligase [ADP-forming] subunit beta (388 aa).

The ATP-grasp domain maps to 9–244 (KEIFRSMGVA…LEEEDPKEIE (236 aa)). Residues K46, 53–55 (GRG), E99, C102, and E107 each bind ATP. N199 and D213 together coordinate Mg(2+). Substrate contacts are provided by residues N264 and 321-323 (GIM).

Belongs to the succinate/malate CoA ligase beta subunit family. Heterotetramer of two alpha and two beta subunits. Mg(2+) is required as a cofactor.

The catalysed reaction is succinate + ATP + CoA = succinyl-CoA + ADP + phosphate. It carries out the reaction GTP + succinate + CoA = succinyl-CoA + GDP + phosphate. It functions in the pathway carbohydrate metabolism; tricarboxylic acid cycle; succinate from succinyl-CoA (ligase route): step 1/1. Succinyl-CoA synthetase functions in the citric acid cycle (TCA), coupling the hydrolysis of succinyl-CoA to the synthesis of either ATP or GTP and thus represents the only step of substrate-level phosphorylation in the TCA. The beta subunit provides nucleotide specificity of the enzyme and binds the substrate succinate, while the binding sites for coenzyme A and phosphate are found in the alpha subunit. In Staphylococcus haemolyticus (strain JCSC1435), this protein is Succinate--CoA ligase [ADP-forming] subunit beta.